Here is a 226-residue protein sequence, read N- to C-terminus: UPF0173 metal-dependent hydrolase Tpet_1587 (226 aa).

It belongs to the UPF0173 family.

The sequence is that of UPF0173 metal-dependent hydrolase Tpet_1587 from Thermotoga petrophila (strain ATCC BAA-488 / DSM 13995 / JCM 10881 / RKU-1).